A 102-amino-acid chain; its full sequence is NADH-quinone oxidoreductase subunit K (102 aa).

3 helical membrane passes run 5-25 (LGHF…GIFL), 31-51 (IVLL…FVAF), and 62-82 (IFVF…LAIL).

Belongs to the complex I subunit 4L family. NDH-1 is composed of 14 different subunits. Subunits NuoA, H, J, K, L, M, N constitute the membrane sector of the complex.

The protein localises to the cell inner membrane. It catalyses the reaction a quinone + NADH + 5 H(+)(in) = a quinol + NAD(+) + 4 H(+)(out). Its function is as follows. NDH-1 shuttles electrons from NADH, via FMN and iron-sulfur (Fe-S) centers, to quinones in the respiratory chain. The immediate electron acceptor for the enzyme in this species is believed to be ubiquinone. Couples the redox reaction to proton translocation (for every two electrons transferred, four hydrogen ions are translocated across the cytoplasmic membrane), and thus conserves the redox energy in a proton gradient. This chain is NADH-quinone oxidoreductase subunit K, found in Albidiferax ferrireducens (strain ATCC BAA-621 / DSM 15236 / T118) (Rhodoferax ferrireducens).